A 679-amino-acid chain; its full sequence is MTKDLLVELGLEELPAYVVTPSEKQLVQRMADFLKDNRLSYDAIEGFSTPRRLAVRVLGLADQQTDLTEDFKGPSKKIALDADGQFSKAAQGFVRGKGLTVDDIEFREVKGEEYVYVTKHEAGKQAKGVLAAVPEVLASLTFPVSMHWANNSFDYIRPVHSLIVLLDDEPLELDFLDIHSGRISRGHRFLGEETSITSADSYEADLRSQFVIASAKERQEMIIAQIRAIEAEQKVQVDIDEDLLNEVLNLVEYPTAFMGSFDPKYLEIPEEVLVTSMKNHQRYFVVRDQAGKLMPNFISVRNGNAKHLQNVIKGNEKVLVARLEDGEFFWREDQKLFIEDLVAKLAHVTFHEKIGSLAEHMDRTKVIAAFLADQAGLSEAEKSAVARAAQIYKFDLLTGMVGEFDELQGIMGEKYALLAGEAAAVATAIREHYLPDSAEGELPETKVGAVLALADKLDTLLSFFSVGLIPSGSNDPYALRRATQGIVRILEHFGWSIPMDKLIDSLYELSFESLTYQHKAEVLDFICARVDKMMGSAIPKDIREAVLASSSFVVPELLARAEALAAASQLDTYKPAVESLSRVFNLAKKAVDAVLIDASLFENDYERALAQAVDSLVLSGSAKEQLAQVFALSPVIDDFFDHTMVMTEDEAIRCNRLALLAELVKKVETIAAFDRLNTK.

This sequence belongs to the class-II aminoacyl-tRNA synthetase family. In terms of assembly, tetramer of two alpha and two beta subunits.

Its subcellular location is the cytoplasm. It carries out the reaction tRNA(Gly) + glycine + ATP = glycyl-tRNA(Gly) + AMP + diphosphate. In Streptococcus equi subsp. zooepidemicus (strain H70), this protein is Glycine--tRNA ligase beta subunit.